Consider the following 242-residue polypeptide: RxLR effector protein PexRD15 (242 aa).

A signal peptide spans 1 to 24 (MMKSLYAVNLVLLLLLAFFAPAPA). The short motif at 48-66 (RLLRAHSSDKEEQKEEEER) is the RxLR-dEER element.

This sequence belongs to the RxLR effector family.

The protein resides in the secreted. It localises to the host cell membrane. Effector that enhances P.infestans colonization of Nicotiana benthamiana leaves. The sequence is that of RxLR effector protein PexRD15 from Phytophthora infestans (strain T30-4) (Potato late blight agent).